A 554-amino-acid polypeptide reads, in one-letter code: CTP synthase (554 aa).

Residues 1 to 265 (MTPLIFVTGG…DELVIDQFKL (265 aa)) form an amidoligase domain region. Residue Ser-13 coordinates CTP. Ser-13 contributes to the UTP binding site. Residues 14–19 (SLGKGI) and Asp-71 contribute to the ATP site. Mg(2+) is bound by residues Asp-71 and Glu-139. Residues 146 to 148 (DIE), 186 to 191 (KTKPTQ), and Lys-222 contribute to the CTP site. Residues 186–191 (KTKPTQ) and Lys-222 contribute to the UTP site. The region spanning 292–545 (NIAVVGKYVD…VRAAREKKAG (254 aa)) is the Glutamine amidotransferase type-1 domain. Residue Gly-353 participates in L-glutamine binding. The active-site Nucleophile; for glutamine hydrolysis is Cys-380. Residues 381–384 (YGMQ), Glu-404, and Arg-471 each bind L-glutamine. Residues His-518 and Glu-520 contribute to the active site.

Belongs to the CTP synthase family. In terms of assembly, homotetramer.

The catalysed reaction is UTP + L-glutamine + ATP + H2O = CTP + L-glutamate + ADP + phosphate + 2 H(+). It catalyses the reaction L-glutamine + H2O = L-glutamate + NH4(+). It carries out the reaction UTP + NH4(+) + ATP = CTP + ADP + phosphate + 2 H(+). Its pathway is pyrimidine metabolism; CTP biosynthesis via de novo pathway; CTP from UDP: step 2/2. Its activity is regulated as follows. Allosterically activated by GTP, when glutamine is the substrate; GTP has no effect on the reaction when ammonia is the substrate. The allosteric effector GTP functions by stabilizing the protein conformation that binds the tetrahedral intermediate(s) formed during glutamine hydrolysis. Inhibited by the product CTP, via allosteric rather than competitive inhibition. In terms of biological role, catalyzes the ATP-dependent amination of UTP to CTP with either L-glutamine or ammonia as the source of nitrogen. Regulates intracellular CTP levels through interactions with the four ribonucleotide triphosphates. The sequence is that of CTP synthase from Xanthomonas axonopodis pv. citri (strain 306).